Here is a 197-residue protein sequence, read N- to C-terminus: Peptide deformylase (197 aa).

Cys106 and His148 together coordinate Fe cation. The active site involves Glu149. His152 is a Fe cation binding site.

The protein belongs to the polypeptide deformylase family. Fe(2+) is required as a cofactor.

It carries out the reaction N-terminal N-formyl-L-methionyl-[peptide] + H2O = N-terminal L-methionyl-[peptide] + formate. Its function is as follows. Removes the formyl group from the N-terminal Met of newly synthesized proteins. Requires at least a dipeptide for an efficient rate of reaction. N-terminal L-methionine is a prerequisite for activity but the enzyme has broad specificity at other positions. The sequence is that of Peptide deformylase from Mycolicibacterium paratuberculosis (strain ATCC BAA-968 / K-10) (Mycobacterium paratuberculosis).